A 421-amino-acid polypeptide reads, in one-letter code: Alpha-1-antitrypsin (421 aa).

A signal peptide spans 1 to 24 (MASSSTWGLLLLAGLCCLVPISLA). N-linked (GlcNAc...) asparagine glycosylation is found at Asn73 and Asn110. The interval 376–395 (GATILEAIPMSIPPNVKFNK) is RCL. Ser386 carries the phosphoserine modification.

Belongs to the serpin family. As to quaternary structure, interacts with CELA2A. Interacts with ERGIC3 and LMAN1/ERGIC53. Interacts with PRSS1/Trypsin.

Its subcellular location is the secreted. Functionally, inhibitor of serine proteases. Its primary target is elastase, but it also has a moderate affinity for plasmin and thrombin. This Sus scrofa (Pig) protein is Alpha-1-antitrypsin (SERPINA1).